Consider the following 526-residue polypeptide: MTDNAIPGPLDPEELQIQYAKSFLLQTDNSGLSLYEHLSALLSRILSERPPNALEVFESLSAELHWSRLKQGSDVLRAPREESHTCRKAEVQRALFSRGDGEGEESEAEGEMTESPLPNLLDLAHLLQQGGVNLGRDEAVRISLALKRLTDTHPLQVCHFWGKILGSGGSYLVAEVQFREGEDDEAEEGGEEEEKGEVEDDVEEEENEEAEDLPPKSTYRPPPVIPKEENGTGANKHVYYVCSEAGAEWVRLPPVTPAQISAARKIRHLFTGNLDAPVITYPPFPGTEINLLRAQIARISAGTHVSPLGYYQFGEEEGEEEEEGAVRDTYEENPDFEGIPVSELVESLSNWVHHVQHILPQGRCVWVNTSVKSEEEEDEEEAEEEEKEEENEPEPEVGPPLLTPLSEDAEIGQTPPWTAFLSTHLIPHYALAVLRSNLWPGAYTVSSAKKFENIYIGWGLKYMPEGYSPPAPPAPQAEYPSGPEITESTDPTVEEEQALKAAKEEAEAAAEEMEEEEDEEEEEEDD.

3 disordered regions span residues 180–231 (EGED…EENG), 371–411 (VKSE…DAEI), and 469–526 (PPAP…EEDD). Acidic residues-rich tracts occupy residues 181–212 (GEDD…EAED) and 374–395 (EEEE…EPEP). Basic and acidic residues predominate over residues 497 to 506 (QALKAAKEEA). The segment covering 507 to 526 (EAAAEEMEEEEDEEEEEEDD) has biased composition (acidic residues).

It belongs to the flagellar radial spoke RSP4/6 family. In terms of assembly, component of sperm axonemal radial spoke complexes.

The protein resides in the cytoplasm. The protein localises to the cytoskeleton. It is found in the flagellum axoneme. Its function is as follows. Functions as part of radial spoke complexes in the axoneme of sperm flagella that play an important part in motility. The triple radial spokes (RS1, RS2 and RS3) are required to modulate beating of the sperm flagellum. This is Radial spoke head protein 6 homolog A (rsph6a) from Xenopus tropicalis (Western clawed frog).